Here is an 804-residue protein sequence, read N- to C-terminus: DNA gyrase subunit B (804 aa).

The 116-residue stretch at 431–546 (CEMYIVEGDS…NGCVYIAQPP (116 aa)) folds into the Toprim domain. Residues E437, D511, and D513 each coordinate Mg(2+).

The protein belongs to the type II topoisomerase GyrB family. As to quaternary structure, heterotetramer, composed of two GyrA and two GyrB chains. In the heterotetramer, GyrA contains the active site tyrosine that forms a transient covalent intermediate with DNA, while GyrB binds cofactors and catalyzes ATP hydrolysis. Requires Mg(2+) as cofactor. Mn(2+) serves as cofactor. Ca(2+) is required as a cofactor.

The protein localises to the cytoplasm. The enzyme catalyses ATP-dependent breakage, passage and rejoining of double-stranded DNA.. A type II topoisomerase that negatively supercoils closed circular double-stranded (ds) DNA in an ATP-dependent manner to modulate DNA topology and maintain chromosomes in an underwound state. Negative supercoiling favors strand separation, and DNA replication, transcription, recombination and repair, all of which involve strand separation. Also able to catalyze the interconversion of other topological isomers of dsDNA rings, including catenanes and knotted rings. Type II topoisomerases break and join 2 DNA strands simultaneously in an ATP-dependent manner. This is DNA gyrase subunit B from Chlamydia muridarum (strain MoPn / Nigg).